The primary structure comprises 167 residues: Small ribosomal subunit protein uS5 (167 aa).

Positions 11–74 constitute an S5 DRBM domain; the sequence is LQEKLIAVNR…DKARRNMTTI (64 aa).

It belongs to the universal ribosomal protein uS5 family. In terms of assembly, part of the 30S ribosomal subunit. Contacts proteins S4 and S8.

With S4 and S12 plays an important role in translational accuracy. In terms of biological role, located at the back of the 30S subunit body where it stabilizes the conformation of the head with respect to the body. The polypeptide is Small ribosomal subunit protein uS5 (Baumannia cicadellinicola subsp. Homalodisca coagulata).